We begin with the raw amino-acid sequence, 1770 residues long: MFNRSNTAGGSQAMKEGLGINKLSPISSNSNPSSLTSSNYEKYLQLATEKNPCMILELELDGKVRYGSPQWNTITGVADDSGSSPTYIADLILGSDQDKGVFQKATDMLLMNDDTSCTITFKIKAADYEGSAGCDDESTITTLEARGILIRDGHTQLPSHTMWIVKPRTNDWSDFYANEDAQDDMVIQLSDNCDDIDIQLPEEFAKTLGFGAKIFVQYLKRIRLEMIIDEFNLPLPKMELCRVCENFVPVWWLETHSQSCVCEHRTESLIQLLHDNLLEQQAILANFTKDSEYKGSQIQVRSNNFLNQVLDSLRELCQDAIDINPSEMVPDLYHSLSTFPQDNGNNNNNNNNNNNNNNALLDQFPIQKDTVSLNSYFQFSPRTNHNIQNVTSWQSRFFLNDDQDPGLALLIHDTLDLARKKVDAVLRLDNAMTYSLKIKNEVNNYVVQLIREQIEINKHAILTHPMNLRSSSIFHSPLPQIHSQQPEAENLIYSSSTPLQVQHDQCASFEAPSKSHLEPIPFPVSSIEETPTANDIRHPSPLPRSCSNTVMKLPTPRRKLDSNGLFSDAYLNADIIPNPSIESTISIDRDNNTNSRGSSMKQYGIGEATDSRTSNSERPSSSSSRLGIRSRSITPRQKIEYSHVDNDDRTNEMLSRDKDSLQPQPSVDTTITSSTQATTTGTKTNSNNSTNSVLPKLMTSISLTPRRGSPSFGNLASHSMQQTNSFKLIHDKSPISSPFTFSKDFLTPEQHPSNIARTDSINNAMLTSPNMPLSPLLLATNQTVKSPTPSIKDYDILKPISKGAYGSVYLARKKLTGDYFAIKVLRKSDMIAKNQVTNVKSERAIMMVQSDKPYVARLFASFQNKDNLFLVMEYLPGGDLATLIKMMGYLPDQWAKQYLTEIVVGVNDMHQNGIIHHDLKPENLLIDNAGHVKLTDFGLSRAGLIRRHKFVPHKSSLSISSTLPIDNPANNFTMNNNNSNHSQLSTPDSFTSDHKQYNRSKKSSLGQQYEHSEYSSTSNSHSMTPTPSTNTVVYPSYYRGKDRSHGSSNIDLPASLRRSESQLSFSLLDISRSSTPPLANPTNSNANNIMRRKSLTENKSFSNDLLSSDAIAATNTNINSNNNISLSPAPSDLALFYPDDSKQNKKFFGTPDYLAPETIEGKGEDNKQCDWWSVGCIFFELLLGYPPFHAETPDAVFKKILSGVIQWPEFKNEEEEREFLTPEAKDLIEKLLVVDPAKRLGAKGIQEIKDHPYFKNVDWDHVYDEEASFVPTIDNPEDTDYFDLRGAELQDFGDDIENDNANILFGKHGINTDVSELSAANLSPPLNHKNILSRKLSMSNTTNRSSNNSNSSVHDFGAHTPVNKLSIASVLESVPQETGYITPNGTGTTTTSAKNSPNLKNLSLAIPPHMRDRRSSKLNDSQTEFGSFNFRNLSALDKANKDAINRLKSEHFSEQPGVHRRTSSASLMGSSSDGSVSTPGSNASNTTSGGKLKIHKPTISGSPSTFGTFPKTFLRSDSFSTRSYSPERSISIDSSTLSRKGSIIGDNQQTTANSSDSPTMTKFKSPLSPANTTTVSSYFSRQRVLSKSFSQRTNSSDLSAEESDRLQAISRVNSLRNRRRSGRKSSSTSEIGYHMDVLVCEPIPIHRYRVTKDLENLGCTVVSVGAGDELVSRATSGVSFDLIMTALKLPKLGAIDIVQLLKQTNGANSTTPIVAITNYFQEAATSRVFDDVLEKPVKLDELKKLVAKYALKKSQEDEEHTILSDSDETH.

A disordered region spans residues 334–358 (HSLSTFPQDNGNNNNNNNNNNNNNN). Low complexity predominate over residues 343–358 (NGNNNNNNNNNNNNNN). Ser-380 and Ser-476 each carry phosphoserine. Disordered regions lie at residues 530–563 (TPTA…LDSN) and 583–694 (STIS…NSVL). Over residues 583-601 (STISIDRDNNTNSRGSSMK) the composition is skewed to polar residues. The segment covering 611-632 (SRTSNSERPSSSSSRLGIRSRS) has biased composition (low complexity). Over residues 637 to 660 (QKIEYSHVDNDDRTNEMLSRDKDS) the composition is skewed to basic and acidic residues. Over residues 669 to 692 (TTITSSTQATTTGTKTNSNNSTNS) the composition is skewed to low complexity. Position 704 is a phosphothreonine (Thr-704). Phosphoserine is present on residues Ser-709, Ser-733, Ser-736, and Ser-737. Thr-747 bears the Phosphothreonine mark. The Protein kinase domain maps to 794–1254 (YDILKPISKG…IQEIKDHPYF (461 aa)). Residues 800–808 (ISKGAYGSV) and Lys-823 each bind ATP. Asp-918 functions as the Proton acceptor in the catalytic mechanism. Positions 970-980 (NNFTMNNNNSN) are enriched in low complexity. The tract at residues 970–1032 (NNFTMNNNNS…MTPTPSTNTV (63 aa)) is disordered. Over residues 981-990 (HSQLSTPDSF) the composition is skewed to polar residues. Positions 1014-1031 (YSSTSNSHSMTPTPSTNT) are enriched in low complexity. Ser-1044, Ser-1048, and Ser-1064 each carry phosphoserine. A Phosphothreonine; by PHO85 modification is found at Thr-1075. Residues 1255–1320 (KNVDWDHVYD…NTDVSELSAA (66 aa)) enclose the AGC-kinase C-terminal domain. A compositionally biased stretch (low complexity) spans 1378-1391 (TGYITPNGTGTTTT). A disordered region spans residues 1378–1403 (TGYITPNGTGTTTTSAKNSPNLKNLS). The span at 1392-1401 (SAKNSPNLKN) shows a compositional bias: polar residues. A Phosphoserine modification is found at Ser-1421. 2 disordered regions span residues 1448-1507 (KSEH…STFG) and 1519-1572 (FSTR…PANT). A compositionally biased stretch (low complexity) spans 1463–1481 (SSASLMGSSSDGSVSTPGS). Ser-1531, Ser-1538, Ser-1542, and Ser-1565 each carry phosphoserine. Positions 1636-1750 (DVLVCEPIPI…ELKKLVAKYA (115 aa)) constitute a Response regulatory domain. Ser-1764 carries the post-translational modification Phosphoserine.

It belongs to the protein kinase superfamily. Ser/Thr protein kinase family. Interacts with the cyclin-dependent kinase (CDK) PHO85 and IGO1. Autophosphorylated. Phosphorylation by PKA strongly inhibits kinase activity. Phosphorylation by cyclin-CDK PHO80-PHO85 under favorable growth condition causes inactivation of RIM15 by promoting its export to the cytoplasm.

The protein localises to the cytoplasm. It is found in the nucleus. The enzyme catalyses L-seryl-[protein] + ATP = O-phospho-L-seryl-[protein] + ADP + H(+). The catalysed reaction is L-threonyl-[protein] + ATP = O-phospho-L-threonyl-[protein] + ADP + H(+). Its activity is regulated as follows. Kinase activity is inhibited by phosphorylation by cAMP-dependent protein kinase (PKA). In terms of biological role, protein kinase that positively regulates proper entry into stationary phase of cells under nutrient starvation conditions. Involved in glycogen and trehalose accumulation, derepression of stress-induced genes, induction of thermotolerance and starvation resistance, and proper G1 cell cycle arrest. Also involved in the activation of a meiotic genes activation pathway. Phosphorylates IGO1 and IGO2, both involved in the TORC1 control of gene expression and chronological life span. The protein is Serine/threonine-protein kinase RIM15 (RIM15) of Saccharomyces cerevisiae (strain ATCC 204508 / S288c) (Baker's yeast).